Here is a 288-residue protein sequence, read N- to C-terminus: Diaminopimelate epimerase (288 aa).

Residues asparagine 14 and asparagine 67 each contribute to the substrate site. Catalysis depends on cysteine 76, which acts as the Proton donor. Residues 77–78 (GN), asparagine 166, asparagine 199, and 217–218 (ER) each bind substrate. Cysteine 226 acts as the Proton acceptor in catalysis. 227–228 (GT) contributes to the substrate binding site.

The protein belongs to the diaminopimelate epimerase family. In terms of assembly, homodimer.

It localises to the cytoplasm. It carries out the reaction (2S,6S)-2,6-diaminopimelate = meso-2,6-diaminopimelate. It participates in amino-acid biosynthesis; L-lysine biosynthesis via DAP pathway; DL-2,6-diaminopimelate from LL-2,6-diaminopimelate: step 1/1. Its function is as follows. Catalyzes the stereoinversion of LL-2,6-diaminopimelate (L,L-DAP) to meso-diaminopimelate (meso-DAP), a precursor of L-lysine and an essential component of the bacterial peptidoglycan. This chain is Diaminopimelate epimerase, found in Bacillus cereus (strain B4264).